The primary structure comprises 161 residues: MIDADGYRPNVGIILMNERGQLLWARRVGQNAWQFPQGGIKSDETPEEALFRELKEEVGLDPHQVEIIGKTRGWLRYRLPKRMLRHNSKPLCIGQKQKWFLLSIRCPDASVCVDGTETPEFDGWRWVSYWYPLGQVVAFKKDVYRRALKELIPSAHRRLEK.

Residues 6 to 149 (GYRPNVGIIL…KKDVYRRALK (144 aa)) form the Nudix hydrolase domain. A Nudix box motif is present at residues 38-59 (GGIKSDETPEEALFRELKEEVG).

Belongs to the Nudix hydrolase family. RppH subfamily. Requires a divalent metal cation as cofactor.

Functionally, accelerates the degradation of transcripts by removing pyrophosphate from the 5'-end of triphosphorylated RNA, leading to a more labile monophosphorylated state that can stimulate subsequent ribonuclease cleavage. The chain is RNA pyrophosphohydrolase from Marinomonas sp. (strain MWYL1).